We begin with the raw amino-acid sequence, 281 residues long: Acetyl-coenzyme A carboxylase carboxyl transferase subunit beta (281 aa).

Residues 1 to 23 are disordered; the sequence is MAWFKREKKGISTSTEEKKEAPD. The region spanning 25 to 281 is the CoA carboxyltransferase N-terminal domain; sequence LWNKCPNCKK…LAAFLKMMKN (257 aa). Zn(2+) contacts are provided by Cys-29, Cys-32, Cys-48, and Cys-51. The C4-type zinc finger occupies 29 to 51; that stretch reads CPNCKKALHSADLLENKYVCQYC.

This sequence belongs to the AccD/PCCB family. In terms of assembly, acetyl-CoA carboxylase is a heterohexamer composed of biotin carboxyl carrier protein (AccB), biotin carboxylase (AccC) and two subunits each of ACCase subunit alpha (AccA) and ACCase subunit beta (AccD). Zn(2+) is required as a cofactor.

Its subcellular location is the cytoplasm. It carries out the reaction N(6)-carboxybiotinyl-L-lysyl-[protein] + acetyl-CoA = N(6)-biotinyl-L-lysyl-[protein] + malonyl-CoA. The protein operates within lipid metabolism; malonyl-CoA biosynthesis; malonyl-CoA from acetyl-CoA: step 1/1. In terms of biological role, component of the acetyl coenzyme A carboxylase (ACC) complex. Biotin carboxylase (BC) catalyzes the carboxylation of biotin on its carrier protein (BCCP) and then the CO(2) group is transferred by the transcarboxylase to acetyl-CoA to form malonyl-CoA. This chain is Acetyl-coenzyme A carboxylase carboxyl transferase subunit beta, found in Pedobacter heparinus (strain ATCC 13125 / DSM 2366 / CIP 104194 / JCM 7457 / NBRC 12017 / NCIMB 9290 / NRRL B-14731 / HIM 762-3).